The primary structure comprises 51 residues: Large ribosomal subunit protein eL39 (51 aa).

This sequence belongs to the eukaryotic ribosomal protein eL39 family. As to quaternary structure, interacts with impact.

This chain is Large ribosomal subunit protein eL39 (rpl39), found in Ictalurus punctatus (Channel catfish).